Consider the following 67-residue polypeptide: Ranatuerin-2Vb (67 aa).

Residues 1 to 22 (MFTLKKSFLLLFFLGTITLSLC) form the signal peptide. Positions 23-39 (EEERGADDDDGEEEVKR) are excised as a propeptide. A disulfide bridge connects residues Cys-62 and Cys-67.

Expressed by the skin glands.

It is found in the secreted. Its function is as follows. Antimicrobial peptide. This Odorrana versabilis (Chinese bamboo leaf odorous frog) protein is Ranatuerin-2Vb.